A 389-amino-acid polypeptide reads, in one-letter code: Chalcone synthase 4 (389 aa).

The active site involves cysteine 164.

Belongs to the thiolase-like superfamily. Chalcone/stilbene synthases family.

The enzyme catalyses (E)-4-coumaroyl-CoA + 3 malonyl-CoA + 3 H(+) = 2',4,4',6'-tetrahydroxychalcone + 3 CO2 + 4 CoA. It functions in the pathway secondary metabolite biosynthesis; flavonoid biosynthesis. Functionally, the primary product of this enzyme is 4,2',4',6'-tetrahydroxychalcone (also termed naringenin-chalcone or chalcone) which can under specific conditions spontaneously isomerize into naringenin. This is Chalcone synthase 4 (CHS4) from Medicago sativa (Alfalfa).